Consider the following 231-residue polypeptide: Mediator of RNA polymerase II transcription subunit 18 (231 aa).

Residues 191–218 are a coiled coil; that stretch reads HLTDIEALNKAVKELEKVKTELHGLMNL.

This sequence belongs to the Mediator complex subunit 18 family. In terms of assembly, component of the Mediator complex.

The protein localises to the nucleus. In terms of biological role, component of the Mediator complex, a coactivator involved in the regulated transcription of nearly all RNA polymerase II-dependent genes. Mediator functions as a bridge to convey information from gene-specific regulatory proteins to the basal RNA polymerase II transcription machinery. Mediator is recruited to promoters by direct interactions with regulatory proteins and serves as a scaffold for the assembly of a functional preinitiation complex with RNA polymerase II and the general transcription factors. This chain is Mediator of RNA polymerase II transcription subunit 18 (SRB5), found in Yarrowia lipolytica (strain CLIB 122 / E 150) (Yeast).